The sequence spans 485 residues: P2X purinoceptor 2 (485 aa).

At 1–43 (MAAAQPRLPAGAAMVRRLARGCWSAFWDYETPKVIVVRNRRLG) the chain is on the cytoplasmic side. Disulfide bonds link C22–C443, C126–C177, C137–C160, C143–C171, C227–C237, and C271–C280. Residues 44-64 (FVHRMVQLLILLYFVWYVFIV) form a helical membrane-spanning segment. The Extracellular portion of the chain corresponds to 65-339 (QKSYQDSETG…IVHGQAGKFS (275 aa)). Positions 82 and 84 each coordinate ATP. Residue N195 is glycosylated (N-linked (GlcNAc...) asparagine). T197 is a binding site for ATP. N252 carries N-linked (GlcNAc...) asparagine glycosylation. ATP-binding residues include S297, N301, and R303. An N-linked (GlcNAc...) asparagine glycan is attached at N311. Residue K321 coordinates ATP. The segment at 322–335 (AYGIRIDVIVHGQA) is pore-forming motif. The helical transmembrane segment at 340–360 (LIPTIINLATALTSIGVGSFL) threads the bilayer. Residues 361 to 485 (CDWILLTFMN…STDPKGLAQL (125 aa)) are Cytoplasmic-facing. Residues 406-485 (PPPSHYSQDQ…STDPKGLAQL (80 aa)) form a disordered region. Residues 420–436 (PSGEGPALGEGAELPLA) are compositionally biased toward low complexity. Polar residues predominate over residues 469–478 (PSQQDSTSTD).

The protein belongs to the P2X receptor family. Homotrimer and heterotrimer; functional P2XRs are organized as homomeric and heteromeric trimers. Homotrimer. Forms heterotrimer with P2XR1. Forms heterotrimer with P2XR3. Forms heterotrimer with P2XR6.

It localises to the cell membrane. It catalyses the reaction Ca(2+)(in) = Ca(2+)(out). The catalysed reaction is K(+)(in) = K(+)(out). The enzyme catalyses Na(+)(in) = Na(+)(out). With respect to regulation, fast activation by external ATP. Exhibits slow desensitization during prolonged ATP activation. Not sensitive to the ATP agonist:alpha/beta-methylene-ATP. ATP-gated nonselective transmembrane cation channel permeable to potassium, sodium and calcium. Activation by extracellular ATP induces a variety of cellular responses, such as excitatory postsynaptic responses in sensory neurons, neuromuscular junctions (NMJ) formation, hearing, perception of taste and peristalsis. In the inner ear, regulates sound transduction and auditory neurotransmission, outer hair cell electromotility, inner ear gap junctions, and K(+) recycling. Mediates synaptic transmission between neurons and from neurons to smooth muscle. The chain is P2X purinoceptor 2 (P2rx2) from Mus musculus (Mouse).